A 247-amino-acid polypeptide reads, in one-letter code: ATP synthase subunit a, chloroplastic (247 aa).

5 consecutive transmembrane segments (helical) span residues 38–58 (QVLI…SIAV), 95–115 (VPFI…GALL), 134–154 (INTT…AGLS), 199–219 (LVVV…VMFL), and 220–240 (GLFT…AYIG).

The protein belongs to the ATPase A chain family. In terms of assembly, F-type ATPases have 2 components, CF(1) - the catalytic core - and CF(0) - the membrane proton channel. CF(1) has five subunits: alpha(3), beta(3), gamma(1), delta(1), epsilon(1). CF(0) has four main subunits: a, b, b' and c.

Its subcellular location is the plastid. The protein localises to the chloroplast thylakoid membrane. In terms of biological role, key component of the proton channel; it plays a direct role in the translocation of protons across the membrane. This is ATP synthase subunit a, chloroplastic from Oenothera argillicola (Appalachian evening primrose).